A 260-amino-acid polypeptide reads, in one-letter code: Exosome complex component Rrp42 (260 aa).

This sequence belongs to the RNase PH family. Rrp42 subfamily. Component of the archaeal exosome complex. Forms a hexameric ring-like arrangement composed of 3 Rrp41-Rrp42 heterodimers. The hexameric ring associates with a trimer of Rrp4 and/or Csl4 subunits.

It localises to the cytoplasm. Functionally, non-catalytic component of the exosome, which is a complex involved in RNA degradation. Contributes to the structuring of the Rrp41 active site. This is Exosome complex component Rrp42 from Methanocella arvoryzae (strain DSM 22066 / NBRC 105507 / MRE50).